The chain runs to 336 residues: Pyridoxal 5'-phosphate synthase subunit PdxS (336 aa).

Asp62 is a D-ribose 5-phosphate binding site. Lys119 serves as the catalytic Schiff-base intermediate with D-ribose 5-phosphate. Position 191 (Gly191) interacts with D-ribose 5-phosphate. Lys203 provides a ligand contact to D-glyceraldehyde 3-phosphate. D-ribose 5-phosphate is bound by residues Gly254 and Gly275 to Ser276.

Belongs to the PdxS/SNZ family. In the presence of PdxT, forms a dodecamer of heterodimers.

The enzyme catalyses aldehydo-D-ribose 5-phosphate + D-glyceraldehyde 3-phosphate + L-glutamine = pyridoxal 5'-phosphate + L-glutamate + phosphate + 3 H2O + H(+). Its pathway is cofactor biosynthesis; pyridoxal 5'-phosphate biosynthesis. In terms of biological role, catalyzes the formation of pyridoxal 5'-phosphate from ribose 5-phosphate (RBP), glyceraldehyde 3-phosphate (G3P) and ammonia. The ammonia is provided by the PdxT subunit. Can also use ribulose 5-phosphate and dihydroxyacetone phosphate as substrates, resulting from enzyme-catalyzed isomerization of RBP and G3P, respectively. This is Pyridoxal 5'-phosphate synthase subunit PdxS from Pyrobaculum calidifontis (strain DSM 21063 / JCM 11548 / VA1).